A 331-amino-acid polypeptide reads, in one-letter code: Vitamin B12 import system permease protein BtuC (331 aa).

The next 7 helical transmembrane spans lie at 21 to 43, 63 to 85, 90 to 112, 116 to 138, 151 to 173, 193 to 210, and 239 to 261; these read LALL…ERWI, PRTL…MQAV, LAEP…TVLL, LLPV…FLLL, LLIG…YFST, WRHG…LWLS, and VLVL…IAFI.

This sequence belongs to the binding-protein-dependent transport system permease family. FecCD subfamily. In terms of assembly, the complex is composed of two ATP-binding proteins (BtuD), two transmembrane proteins (BtuC) and a solute-binding protein (BtuF).

Its subcellular location is the cell inner membrane. In terms of biological role, part of the ABC transporter complex BtuCDF involved in vitamin B12 import. Involved in the translocation of the substrate across the membrane. This is Vitamin B12 import system permease protein BtuC from Pectobacterium atrosepticum (strain SCRI 1043 / ATCC BAA-672) (Erwinia carotovora subsp. atroseptica).